Reading from the N-terminus, the 299-residue chain is S-methyl-5'-thioadenosine phosphorylase (299 aa).

Phosphate-binding positions include S14, 56-57 (RH), and 89-90 (SA). M191 lines the substrate pocket. T192 contributes to the phosphate binding site. 215–217 (DYD) lines the substrate pocket.

Belongs to the PNP/MTAP phosphorylase family. MTAP subfamily. As to quaternary structure, homohexamer. Dimer of a homotrimer.

The enzyme catalyses S-methyl-5'-thioadenosine + phosphate = 5-(methylsulfanyl)-alpha-D-ribose 1-phosphate + adenine. Its pathway is amino-acid biosynthesis; L-methionine biosynthesis via salvage pathway; S-methyl-5-thio-alpha-D-ribose 1-phosphate from S-methyl-5'-thioadenosine (phosphorylase route): step 1/1. Functionally, catalyzes the reversible phosphorylation of S-methyl-5'-thioadenosine (MTA) to adenine and 5-methylthioribose-1-phosphate. Involved in the breakdown of MTA, a major by-product of polyamine biosynthesis. Responsible for the first step in the methionine salvage pathway after MTA has been generated from S-adenosylmethionine. Has broad substrate specificity with 6-aminopurine nucleosides as preferred substrates. The sequence is that of S-methyl-5'-thioadenosine phosphorylase from Gloeobacter violaceus (strain ATCC 29082 / PCC 7421).